Reading from the N-terminus, the 577-residue chain is E3 ubiquitin-protein ligase MSL2 (577 aa).

A sufficient for interaction with MSL1 region spans residues 1–116; it reads MNPVNATALY…CEYITQTTLA (116 aa). 8 residues coordinate Zn(2+): cysteine 44, cysteine 47, cysteine 62, histidine 64, cysteine 67, cysteine 70, cysteine 81, and cysteine 84. An RING-type zinc finger spans residues 44–85; that stretch reads CCVCGHLLQDPIAPTNSTCQHYVCKTCKGKKMMMKPSCSWCK. Lysine 375 is covalently cross-linked (Glycyl lysine isopeptide (Lys-Gly) (interchain with G-Cter in SUMO2)). The interval 405 to 427 is disordered; that stretch reads TKSMKKSHEHGSKKSHSKTKPGI. Basic residues predominate over residues 407–423; that stretch reads SMKKSHEHGSKKSHSKT. Serine 447 is subject to Phosphoserine. A CXC MSL2-type domain is found at 457–508; that stretch reads QEKKGCKCGRATQNPSVLTCRGQRCPCYSNRKACLDCICRGCQNSYMANGEK. Zn(2+)-binding residues include cysteine 462, cysteine 464, cysteine 476, cysteine 481, cysteine 483, cysteine 490, cysteine 493, cysteine 495, and cysteine 498.

This sequence belongs to the MSL2 family. Component of a multisubunit histone acetyltransferase complex (MSL) at least composed of the KAT8/MOF/MYST1, MSL1/hampin, MSL2 and MSL3. Forms a MSL heterotetrameric core with MSL1.

It localises to the nucleus. It is found in the chromosome. The enzyme catalyses S-ubiquitinyl-[E2 ubiquitin-conjugating enzyme]-L-cysteine + [acceptor protein]-L-lysine = [E2 ubiquitin-conjugating enzyme]-L-cysteine + N(6)-ubiquitinyl-[acceptor protein]-L-lysine.. It participates in protein modification; protein ubiquitination. Non-catalytic component of the MSL histone acetyltransferase complex, a multiprotein complex that mediates the majority of histone H4 acetylation at 'Lys-16' (H4K16ac), an epigenetic mark that prevents chromatin compaction. The MSL complex is required for chromosome stability and genome integrity by maintaining homeostatic levels of H4K16ac. The MSL complex is also involved in gene dosage by promoting up-regulation of genes expressed by the X chromosome. X up-regulation is required to compensate for autosomal biallelic expression. The MSL complex also participates in gene dosage compensation by promoting expression of Tsix non-coding RNA. MSL2 plays a key role in gene dosage by ensuring biallelic expression of a subset of dosage-sensitive genes, including many haploinsufficient genes. Acts by promoting promoter-enhancer contacts, thereby preventing DNA methylation of one allele and creating a methylation-free environment for methylation-sensitive transcription factors such as SP1, KANSL1 and KANSL3. Also acts as an E3 ubiquitin ligase that promotes monoubiquitination of histone H2B at 'Lys-35' (H2BK34Ub), but not that of H2A. This activity is greatly enhanced by heterodimerization with MSL1. H2B ubiquitination in turn stimulates histone H3 methylation at 'Lys-4' (H3K4me) and 'Lys-79' (H3K79me) and leads to gene activation, including that of HOXA9 and MEIS1. Also involved in the DNA damage response by mediating ubiquitination of TP53/p53 and TP53BP1. This chain is E3 ubiquitin-protein ligase MSL2, found in Homo sapiens (Human).